Reading from the N-terminus, the 347-residue chain is LRP2-binding protein (347 aa).

One copy of the TPR repeat lies at 59 to 92 (TLAYFLRGQLYFEEGWYEEALEQFEEIKEKDHQA). Sel1-like repeat units lie at residues 93–125 (TYQLGVMYYDGLGTTLDAEKGVDYMKKILDSPC), 133–168 (FAAAYNLGRAYYEGKGVKRSNEEAERLWLIAADNGN), 173–206 (VKAQSMLGLYYSTKEPKELEKAFYWHSEACGNGN), 207–242 (LESQGALGLMYLYGQGIRQDTEAALQCLREAAERGN), 243–277 (VYAQGNLVEYYYKMKFFTKCVAFSKRIADYDEVHD), and 297–332 (AMASFYHARCLQLGLGITRDETTAKHYYSKACRLNP).

In terms of assembly, interacts with LRP2.

It localises to the cytoplasm. Its function is as follows. May act as an adapter that regulates LRP2 function. This Homo sapiens (Human) protein is LRP2-binding protein (LRP2BP).